The primary structure comprises 291 residues: MTQSSSVERLVGEIDEFGYTVVEDVLDADSVAAYLADTRRLERELPTVIANSTTVVKGLARPGHVPVDRVDHDWVRIDNLLLHGTRYEALPVHPKLLPVIEGVLGRDCLLSWCMTSNQLPGAVAQRLHCDDEMYPLPRPHQPLLCNALIALCDFTADNGATQVVPGSHRWPERPSPPYPEGKPVEINAGDALIWNGSLWHTAAANRTDAPRPALTINFCVGFVRQQVNQQLSIPRELVRCFEPRLQELIGYGLYAGKMGRIDWRPPADYLDADRHPFLDAVADRLQTSVRL.

It belongs to the PhyH family.

This is an uncharacterized protein from Mycobacterium bovis (strain ATCC BAA-935 / AF2122/97).